A 97-amino-acid polypeptide reads, in one-letter code: Large ribosomal subunit protein uL23 (97 aa).

The protein belongs to the universal ribosomal protein uL23 family. Part of the 50S ribosomal subunit. Contacts protein L29, and trigger factor when it is bound to the ribosome.

Functionally, one of the early assembly proteins it binds 23S rRNA. One of the proteins that surrounds the polypeptide exit tunnel on the outside of the ribosome. Forms the main docking site for trigger factor binding to the ribosome. The sequence is that of Large ribosomal subunit protein uL23 from Agrobacterium fabrum (strain C58 / ATCC 33970) (Agrobacterium tumefaciens (strain C58)).